The chain runs to 176 residues: MSFNTEVQPGICMEPDAITQEYVFNHTMLRVKDPKRSLDFYSRVLGMRLLRRLDFEEGRFSLYFLAMTRGEEVPDAVDERQRYTFGRQSVLELTHNWGSESDDSQYHNGNQDPRGFGHICFSVPDLVAACERFETLGVNFVKPLDRGMKNVAFISDPDGYWVEIVQASLNGEMGRG.

Residues 23 to 167 form the VOC domain; that stretch reads VFNHTMLRVK…DGYWVEIVQA (145 aa). Histidine 26 is a binding site for Ni(2+). Arginine 30 lines the substrate pocket. A Ni(2+)-binding site is contributed by glutamate 92. Substrate-binding residues include asparagine 96, arginine 114, and histidine 118. Histidine 118 and glutamate 163 together coordinate Ni(2+). Glutamate 163 functions as the Proton donor/acceptor in the catalytic mechanism.

It belongs to the glyoxalase I family. In terms of assembly, monomer. The cofactor is Ni(2+). It depends on Zn(2+) as a cofactor.

It carries out the reaction (R)-S-lactoylglutathione = methylglyoxal + glutathione. It participates in secondary metabolite metabolism; methylglyoxal degradation; (R)-lactate from methylglyoxal: step 1/2. Catalyzes the conversion of hemimercaptal, formed from methylglyoxal and glutathione, to S-lactoylglutathione. This Pseudomonas aeruginosa (strain ATCC 15692 / DSM 22644 / CIP 104116 / JCM 14847 / LMG 12228 / 1C / PRS 101 / PAO1) protein is Lactoylglutathione lyase (gloA).